The primary structure comprises 89 residues: Elongation factor 1-beta (89 aa).

The protein belongs to the EF-1-beta/EF-1-delta family.

Functionally, promotes the exchange of GDP for GTP in EF-1-alpha/GDP, thus allowing the regeneration of EF-1-alpha/GTP that could then be used to form the ternary complex EF-1-alpha/GTP/AAtRNA. The polypeptide is Elongation factor 1-beta (ef1b) (Methanocaldococcus jannaschii (strain ATCC 43067 / DSM 2661 / JAL-1 / JCM 10045 / NBRC 100440) (Methanococcus jannaschii)).